Here is a 357-residue protein sequence, read N- to C-terminus: Phosphoribosylformylglycinamidine cyclo-ligase (357 aa).

It belongs to the AIR synthase family.

The protein localises to the cytoplasm. The catalysed reaction is 2-formamido-N(1)-(5-O-phospho-beta-D-ribosyl)acetamidine + ATP = 5-amino-1-(5-phospho-beta-D-ribosyl)imidazole + ADP + phosphate + H(+). It participates in purine metabolism; IMP biosynthesis via de novo pathway; 5-amino-1-(5-phospho-D-ribosyl)imidazole from N(2)-formyl-N(1)-(5-phospho-D-ribosyl)glycinamide: step 2/2. The polypeptide is Phosphoribosylformylglycinamidine cyclo-ligase (Rhizobium leguminosarum).